Reading from the N-terminus, the 211-residue chain is Pyridoxine/pyridoxamine 5'-phosphate oxidase (211 aa).

Substrate-binding positions include 7 to 10 (RTDY) and Lys-65. Residues 60 to 65 (RIVLIK), 75 to 76 (FT), Arg-81, and Lys-82 each bind FMN. Residues Tyr-122, Arg-126, and Ser-130 each coordinate substrate. FMN-binding positions include 139–140 (QS) and Trp-183. 189–191 (RLH) is a binding site for substrate. Arg-193 lines the FMN pocket.

The protein belongs to the pyridoxamine 5'-phosphate oxidase family. As to quaternary structure, homodimer. FMN serves as cofactor.

It carries out the reaction pyridoxamine 5'-phosphate + O2 + H2O = pyridoxal 5'-phosphate + H2O2 + NH4(+). The enzyme catalyses pyridoxine 5'-phosphate + O2 = pyridoxal 5'-phosphate + H2O2. Its pathway is cofactor metabolism; pyridoxal 5'-phosphate salvage; pyridoxal 5'-phosphate from pyridoxamine 5'-phosphate: step 1/1. The protein operates within cofactor metabolism; pyridoxal 5'-phosphate salvage; pyridoxal 5'-phosphate from pyridoxine 5'-phosphate: step 1/1. In terms of biological role, catalyzes the oxidation of either pyridoxine 5'-phosphate (PNP) or pyridoxamine 5'-phosphate (PMP) into pyridoxal 5'-phosphate (PLP). The sequence is that of Pyridoxine/pyridoxamine 5'-phosphate oxidase from Herminiimonas arsenicoxydans.